The sequence spans 186 residues: Ribosome-recycling factor (186 aa).

The disordered stretch occupies residues Asp135–Met164.

Belongs to the RRF family.

It localises to the cytoplasm. In terms of biological role, responsible for the release of ribosomes from messenger RNA at the termination of protein biosynthesis. May increase the efficiency of translation by recycling ribosomes from one round of translation to another. This Sinorhizobium medicae (strain WSM419) (Ensifer medicae) protein is Ribosome-recycling factor.